The primary structure comprises 342 residues: MGEVLLGIETSCDETAVAILTDSGEVFAHEVLSQVEHSAYGGVVPEIAARAHYDFLQVLVKKAMSNSGLKFDDLSSIAVTAGPGLVGSLIVGVMFAKAVSYATKKPIIAVNHLEAHALVARMNQEIVFPFLVLIVSGGHCQFMLAHDVGCYSKLGGAIDDSLGEAFDKVARMLGLGYPGGPAVECKAKNGRGDRFFFPRALHNRPGCDFSFSGLKTAVRYAIEREGPLDEEMVCDICASFQECVGDILVSRIRNAIKAARQLKEGIDKLVVTGGVASNGFLRTIISQCAEDMGVTAVFPPRELCTDNGIMVAWAGVENFRKGNAVASLGFAPRARWTMESIS.

Residues H112 and H116 each coordinate Fe cation. Substrate contacts are provided by residues 134 to 138 (IVSGG), D167, G180, and N278. D306 serves as a coordination point for Fe cation.

It belongs to the KAE1 / TsaD family. The cofactor is Fe(2+).

It localises to the cytoplasm. It catalyses the reaction L-threonylcarbamoyladenylate + adenosine(37) in tRNA = N(6)-L-threonylcarbamoyladenosine(37) in tRNA + AMP + H(+). Its function is as follows. Required for the formation of a threonylcarbamoyl group on adenosine at position 37 (t(6)A37) in tRNAs that read codons beginning with adenine. Is involved in the transfer of the threonylcarbamoyl moiety of threonylcarbamoyl-AMP (TC-AMP) to the N6 group of A37, together with TsaE and TsaB. TsaD likely plays a direct catalytic role in this reaction. The polypeptide is tRNA N6-adenosine threonylcarbamoyltransferase (Anaplasma phagocytophilum (strain HZ)).